Consider the following 200-residue polypeptide: Probable GTP-binding protein EngB (200 aa).

The region spanning 26–200 (SIPEVALAGR…IYEIAQCIKK (175 aa)) is the EngB-type G domain. Residues 34–41 (GRSNVGKS), 61–65 (GCTRQ), 80–83 (DLPG), 147–150 (TKID), and 179–181 (VSS) each bind GTP. Residues Ser41 and Thr63 each contribute to the Mg(2+) site.

It belongs to the TRAFAC class TrmE-Era-EngA-EngB-Septin-like GTPase superfamily. EngB GTPase family. It depends on Mg(2+) as a cofactor.

Functionally, necessary for normal cell division and for the maintenance of normal septation. The chain is Probable GTP-binding protein EngB from Ehrlichia ruminantium (strain Welgevonden).